Consider the following 89-residue polypeptide: Glutamyl-tRNA(Gln) amidotransferase subunit C (89 aa).

It belongs to the GatC family. As to quaternary structure, heterotrimer of A, B and C subunits.

It catalyses the reaction L-glutamyl-tRNA(Gln) + L-glutamine + ATP + H2O = L-glutaminyl-tRNA(Gln) + L-glutamate + ADP + phosphate + H(+). The catalysed reaction is L-aspartyl-tRNA(Asn) + L-glutamine + ATP + H2O = L-asparaginyl-tRNA(Asn) + L-glutamate + ADP + phosphate + 2 H(+). In terms of biological role, allows the formation of correctly charged Asn-tRNA(Asn) or Gln-tRNA(Gln) through the transamidation of misacylated Asp-tRNA(Asn) or Glu-tRNA(Gln) in organisms which lack either or both of asparaginyl-tRNA or glutaminyl-tRNA synthetases. The reaction takes place in the presence of glutamine and ATP through an activated phospho-Asp-tRNA(Asn) or phospho-Glu-tRNA(Gln). The chain is Glutamyl-tRNA(Gln) amidotransferase subunit C from Thermus thermophilus (strain ATCC 27634 / DSM 579 / HB8).